The following is an 801-amino-acid chain: Disks large homolog 4 (801 aa).

Residues lysine 4–glutamine 60 form the L27 domain. PDZ domains lie at glutamate 153–lysine 240 and glutamate 248–leucine 335. Positions histidine 339–arginine 373 are disordered. A PDZ 3 domain is found at arginine 393 to proline 474. The region spanning lysine 507–glutamate 577 is the SH3 domain. The region spanning alanine 610–glutamate 786 is the Guanylate kinase-like domain.

The protein belongs to the MAGUK family. Post-translationally, ubiquitinated by MDM2 in response to NMDA receptor activation, leading to proteasome-mediated degradation of DLG4 which is required for AMPA receptor endocytosis. Palmitoylated. Palmitoylation is required for targeting to postsynaptic density, plasma membrane and synapses.

The protein localises to the cell membrane. It is found in the postsynaptic density. Its subcellular location is the synapse. Postsynaptic scaffolding protein that plays a critical role in synaptogenesis and synaptic plasticity by providing a platform for the postsynaptic clustering of crucial synaptic proteins. The protein is Disks large homolog 4 (dlg4) of Danio rerio (Zebrafish).